Consider the following 156-residue polypeptide: ATP synthase subunit b (156 aa).

A helical membrane pass occupies residues 12 to 32 (VAFLIFVLFCMKFIWPPVIAA).

The protein belongs to the ATPase B chain family. In terms of assembly, F-type ATPases have 2 components, F(1) - the catalytic core - and F(0) - the membrane proton channel. F(1) has five subunits: alpha(3), beta(3), gamma(1), delta(1), epsilon(1). F(0) has three main subunits: a(1), b(2) and c(10-14). The alpha and beta chains form an alternating ring which encloses part of the gamma chain. F(1) is attached to F(0) by a central stalk formed by the gamma and epsilon chains, while a peripheral stalk is formed by the delta and b chains.

The protein resides in the cell inner membrane. Functionally, f(1)F(0) ATP synthase produces ATP from ADP in the presence of a proton or sodium gradient. F-type ATPases consist of two structural domains, F(1) containing the extramembraneous catalytic core and F(0) containing the membrane proton channel, linked together by a central stalk and a peripheral stalk. During catalysis, ATP synthesis in the catalytic domain of F(1) is coupled via a rotary mechanism of the central stalk subunits to proton translocation. In terms of biological role, component of the F(0) channel, it forms part of the peripheral stalk, linking F(1) to F(0). The sequence is that of ATP synthase subunit b from Pseudomonas fluorescens (strain ATCC BAA-477 / NRRL B-23932 / Pf-5).